Consider the following 1228-residue polypeptide: DNA repair protein rad5 (1228 aa).

Disordered stretches follow at residues 1 to 96 (MDRH…GTLT), 194 to 242 (PPVR…VLPS), 280 to 302 (QPPT…PRVS), and 445 to 474 (KAMD…QELE). Low complexity predominate over residues 34–43 (PSSSPQFSAP). The span at 70-83 (HNDDDDDDDDDDDE) shows a compositional bias: acidic residues. Residues 211 to 237 (PKKSSTSQARSRSHAQAQPQPQSNTPT) are compositionally biased toward polar residues. Residues 445–454 (KAMDKAKAGD) show a composition bias toward basic and acidic residues. A compositionally biased stretch (acidic residues) spans 465 to 474 (EEAEEGQELE). Residues 574 to 784 (PKQEQHCLGG…FSLVRFLRVE (211 aa)) form the Helicase ATP-binding domain. An ATP-binding site is contributed by 587–594 (DEMGLGKT). The short motif at 735 to 738 (DEAH) is the DEAH box element. The segment at 967–1012 (CPICAEEPMIDQAVTGCWHSACKKCLLDYIKHQTDRNEVPRCFQCR) adopts an RING-type zinc-finger fold. The Helicase C-terminal domain maps to 1060–1216 (ALISHLRTLR…MMSDEEKKMQ (157 aa)).

The protein belongs to the SNF2/RAD54 helicase family.

It localises to the cytoplasm. Its subcellular location is the nucleus. In terms of biological role, probable helicase, member of the UBC2/RAD6 epistasis group. Functions with DNA repair protein uvs-2/rad18 in error-free postreplication DNA repair. Involved in the maintenance of wild-type rates of instability of simple repetitive sequences such as poly(GT) repeats. Seems to be involved in maintaining a balance which acts in favor of error-prone non-homologous joining during DNA double-strand breaks repairs. This Neurospora crassa (strain ATCC 24698 / 74-OR23-1A / CBS 708.71 / DSM 1257 / FGSC 987) protein is DNA repair protein rad5 (mus-41).